The primary structure comprises 179 residues: ATP synthase subunit b (179 aa).

A helical transmembrane segment spans residues threonine 27–valine 47.

The protein belongs to the ATPase B chain family. F-type ATPases have 2 components, F(1) - the catalytic core - and F(0) - the membrane proton channel. F(1) has five subunits: alpha(3), beta(3), gamma(1), delta(1), epsilon(1). F(0) has three main subunits: a(1), b(2) and c(10-14). The alpha and beta chains form an alternating ring which encloses part of the gamma chain. F(1) is attached to F(0) by a central stalk formed by the gamma and epsilon chains, while a peripheral stalk is formed by the delta and b chains.

The protein resides in the cell inner membrane. F(1)F(0) ATP synthase produces ATP from ADP in the presence of a proton or sodium gradient. F-type ATPases consist of two structural domains, F(1) containing the extramembraneous catalytic core and F(0) containing the membrane proton channel, linked together by a central stalk and a peripheral stalk. During catalysis, ATP synthesis in the catalytic domain of F(1) is coupled via a rotary mechanism of the central stalk subunits to proton translocation. Its function is as follows. Component of the F(0) channel, it forms part of the peripheral stalk, linking F(1) to F(0). This is ATP synthase subunit b from Anaeromyxobacter sp. (strain K).